A 153-amino-acid polypeptide reads, in one-letter code: MESWLFLLGILAIAIVGKNKSLIIGVSAVMVFKLIPQTQNFLKLLQTQGINWGVTVISAAIMVPIATGEIGFKELLNVIKSPAGWIAIGCGVLVAVLSAKGVGLLAMSPEMTVALVFGTIIGVVFLKGIAAGPVIASGLTYVILTVFNLVPGH.

4 consecutive transmembrane segments (helical) span residues 4-24, 52-72, 85-105, and 115-135; these read WLFL…SLII, WGVT…EIGF, WIAI…VGLL, and LVFG…GPVI.

Belongs to the UPF0756 family.

It is found in the cell membrane. The chain is UPF0756 membrane protein LCABL_15860 from Lacticaseibacillus casei (strain BL23) (Lactobacillus casei).